Reading from the N-terminus, the 286-residue chain is Shikimate dehydrogenase (NADP(+)) (286 aa).

Residues 20 to 22 and Thr-67 each bind shikimate; that span reads SLS. The Proton acceptor role is filled by Lys-71. Shikimate contacts are provided by Asn-92 and Asp-107. NADP(+) contacts are provided by residues 132–136 and Met-228; that span reads GAGGA. Tyr-230 serves as a coordination point for shikimate. Gly-251 serves as a coordination point for NADP(+).

It belongs to the shikimate dehydrogenase family. As to quaternary structure, homodimer.

It catalyses the reaction shikimate + NADP(+) = 3-dehydroshikimate + NADPH + H(+). It participates in metabolic intermediate biosynthesis; chorismate biosynthesis; chorismate from D-erythrose 4-phosphate and phosphoenolpyruvate: step 4/7. Its function is as follows. Involved in the biosynthesis of the chorismate, which leads to the biosynthesis of aromatic amino acids. Catalyzes the reversible NADPH linked reduction of 3-dehydroshikimate (DHSA) to yield shikimate (SA). This is Shikimate dehydrogenase (NADP(+)) from Geobacter metallireducens (strain ATCC 53774 / DSM 7210 / GS-15).